A 194-amino-acid polypeptide reads, in one-letter code: ATP-dependent Clp protease proteolytic subunit (194 aa).

The active-site Nucleophile is Ser-98. The active site involves His-123.

This sequence belongs to the peptidase S14 family. As to quaternary structure, fourteen ClpP subunits assemble into 2 heptameric rings which stack back to back to give a disk-like structure with a central cavity, resembling the structure of eukaryotic proteasomes.

It localises to the cytoplasm. The enzyme catalyses Hydrolysis of proteins to small peptides in the presence of ATP and magnesium. alpha-casein is the usual test substrate. In the absence of ATP, only oligopeptides shorter than five residues are hydrolyzed (such as succinyl-Leu-Tyr-|-NHMec, and Leu-Tyr-Leu-|-Tyr-Trp, in which cleavage of the -Tyr-|-Leu- and -Tyr-|-Trp bonds also occurs).. In terms of biological role, cleaves peptides in various proteins in a process that requires ATP hydrolysis. Has a chymotrypsin-like activity. Plays a major role in the degradation of misfolded proteins. This Actinobacillus succinogenes (strain ATCC 55618 / DSM 22257 / CCUG 43843 / 130Z) protein is ATP-dependent Clp protease proteolytic subunit.